Here is a 523-residue protein sequence, read N- to C-terminus: MKYVVQEWLRITTLLFIAQAVSAMVLPNATLLEELLEKYMDEDGEWWIANVSRKRAITDSDMQSILDLHNKLRGQVYPPASNMEYMTWDTELERSAESWAETCLWEHGPASLLPSIGQNLGAHWGRYRPPTFHVQAWYDEVRDFTYPHPHECNPYCPYKCSGPVCTHYTQVVWATSSRIGCAINLCHNMNIWGQIWPKAVYLVCNYSPKGNWWGHAPYKPGRPCSACPPSFGGGCRENLCYREGSERPYSPHEPEEETNEIERQRSKAQDATAQSRPRTHSPSGSTGSEDSEKNEVISTQQMSQIVSCEVRLRDQCKGTTCNRYECPAGCLDSKAKVIGSVHYEMQSSICKAAIHYGILDNEGGWVDVTRQGRKNYFIKSYRNGIQSIGKYQSANSFTVSKVTVQAITCETTVEQLCPFQKPASHCPRVYCPHNCMQANPHYARVIGTRIYSDISSICRAAVHAGVVRNEGGYVDVMPVDKRKVYIASFLNGIFSESLQNPPGKQGIQSICCRLNQVDYKTGK.

An N-terminal signal peptide occupies residues 1-23 (MKYVVQEWLRITTLLFIAQAVSA). The SCP domain maps to 66–206 (LDLHNKLRGQ…PKAVYLVCNY (141 aa)). Residues 246–298 (ERPYSPHEPEEETNEIERQRSKAQDATAQSRPRTHSPSGSTGSEDSEKNEVIS) form a disordered region. Over residues 269 to 288 (QDATAQSRPRTHSPSGSTGS) the composition is skewed to polar residues. LCCL domains are found at residues 302–397 (MSQI…ANSF) and 403–505 (TVQA…PGKQ). Intrachain disulfides connect C308/C326, C330/C350, C409/C431, and C435/C458.

This sequence belongs to the CRISP family.

Its subcellular location is the secreted. This Gallus gallus (Chicken) protein is Cysteine-rich secretory protein LCCL domain-containing 1 (CRISPLD1).